The sequence spans 635 residues: Threonine--tRNA ligase (635 aa).

The region spanning 1-61 (MTVVRLPDGT…EIDSDLVLIT (61 aa)) is the TGS domain. The segment at 242–533 (DHRKLGKQLD…LIEHHAGALP (292 aa)) is catalytic. 3 residues coordinate Zn(2+): cysteine 333, histidine 384, and histidine 510.

The protein belongs to the class-II aminoacyl-tRNA synthetase family. As to quaternary structure, homodimer. Requires Zn(2+) as cofactor.

It is found in the cytoplasm. The catalysed reaction is tRNA(Thr) + L-threonine + ATP = L-threonyl-tRNA(Thr) + AMP + diphosphate + H(+). In terms of biological role, catalyzes the attachment of threonine to tRNA(Thr) in a two-step reaction: L-threonine is first activated by ATP to form Thr-AMP and then transferred to the acceptor end of tRNA(Thr). Also edits incorrectly charged L-seryl-tRNA(Thr). This is Threonine--tRNA ligase from Nitrosomonas eutropha (strain DSM 101675 / C91 / Nm57).